The sequence spans 584 residues: 65 kDa membrane protein (584 aa).

An N-terminal signal peptide occupies residues 1–30; sequence MKFKSLITTTLALGVLASTGANFNNNEASA. MAP repeat units lie at residues 45–154, 156–265, 266–374, 375–474, and 475–584; these read GYSK…EDKK, DKAN…ENKA, KRNY…KADR, YVPY…TGTK, and AKAD…KKNK.

The protein localises to the cell membrane. Its function is as follows. Binds various plasma and ECM-proteins. This chain is 65 kDa membrane protein, found in Staphylococcus aureus (strain Newman).